Reading from the N-terminus, the 693-residue chain is Phosphoribosylformylglycinamidine synthase subunit PurL (693 aa).

Histidine 34 is a catalytic residue. Residues tyrosine 37 and lysine 76 each contribute to the ATP site. Residue glutamate 78 participates in Mg(2+) binding. Substrate-binding positions include 79-82 and arginine 101; that span reads SHNH. The active-site Proton acceptor is the histidine 80. Aspartate 102 is a Mg(2+) binding site. Glutamine 222 provides a ligand contact to substrate. Residue aspartate 248 participates in Mg(2+) binding. 292–294 provides a ligand contact to substrate; sequence ETQ. ATP is bound by residues aspartate 470 and glycine 507. Substrate is bound at residue serine 510.

The protein belongs to the FGAMS family. Monomer. Part of the FGAM synthase complex composed of 1 PurL, 1 PurQ and 2 PurS subunits.

It is found in the cytoplasm. It catalyses the reaction N(2)-formyl-N(1)-(5-phospho-beta-D-ribosyl)glycinamide + L-glutamine + ATP + H2O = 2-formamido-N(1)-(5-O-phospho-beta-D-ribosyl)acetamidine + L-glutamate + ADP + phosphate + H(+). It functions in the pathway purine metabolism; IMP biosynthesis via de novo pathway; 5-amino-1-(5-phospho-D-ribosyl)imidazole from N(2)-formyl-N(1)-(5-phospho-D-ribosyl)glycinamide: step 1/2. Part of the phosphoribosylformylglycinamidine synthase complex involved in the purines biosynthetic pathway. Catalyzes the ATP-dependent conversion of formylglycinamide ribonucleotide (FGAR) and glutamine to yield formylglycinamidine ribonucleotide (FGAM) and glutamate. The FGAM synthase complex is composed of three subunits. PurQ produces an ammonia molecule by converting glutamine to glutamate. PurL transfers the ammonia molecule to FGAR to form FGAM in an ATP-dependent manner. PurS interacts with PurQ and PurL and is thought to assist in the transfer of the ammonia molecule from PurQ to PurL. The polypeptide is Phosphoribosylformylglycinamidine synthase subunit PurL (Pyrobaculum islandicum (strain DSM 4184 / JCM 9189 / GEO3)).